Consider the following 261-residue polypeptide: 4-phosphopantoate--beta-alanine ligase (261 aa).

ATP-binding positions include Arg-17, Arg-39, 181–183 (DLN), 187–188 (RS), and 199–200 (NI).

The protein belongs to the archaeal phosphopantothenate synthetase family. As to quaternary structure, homodimer.

The enzyme catalyses (R)-4-phosphopantoate + beta-alanine + ATP = (R)-4'-phosphopantothenate + AMP + diphosphate + H(+). Its pathway is cofactor biosynthesis; coenzyme A biosynthesis. Its activity is regulated as follows. Activity is not affected by 4'-phosphopantothenate or CoA/acetyl-CoA. In terms of biological role, catalyzes the condensation of (R)-4-phosphopantoate and beta-alanine to 4'-phosphopantothenate in the CoA biosynthesis pathway. Cannot use (R)-pantoate as substrate and thus does not display pantothenate synthetase (PS) activity. Displays strict specificity for its natural substrates, 4-phosphopantoate, ATP and beta-alanine. The polypeptide is 4-phosphopantoate--beta-alanine ligase (Thermococcus kodakarensis (strain ATCC BAA-918 / JCM 12380 / KOD1) (Pyrococcus kodakaraensis (strain KOD1))).